The chain runs to 88 residues: DASH complex subunit HSK3 (88 aa).

Low complexity predominate over residues 1-15 (MSSRGSGANAASRQS). The interval 1–24 (MSSRGSGANAASRQSMTASGGAVK) is disordered.

The protein belongs to the DASH complex HSK3 family. In terms of assembly, component of the DASH complex consisting of ASK1, DAD1, DAD2, DAD3, DAD4, DAM1, DUO1, HSK3, SPC19 and SPC34, with a stoichiometry of one copy of each subunit per complex. Multiple DASH complexes oligomerize to form a ring that encircles spindle microtubules and organizes the rod-like NDC80 complexes of the outer kinetochore. DASH complex oligomerization strengthens microtubule attachments. On cytoplasmic microtubules, DASH complexes appear to form patches instead of rings.

The protein localises to the nucleus. It localises to the cytoplasm. It is found in the cytoskeleton. The protein resides in the spindle. Its subcellular location is the chromosome. The protein localises to the centromere. It localises to the kinetochore. In terms of biological role, component of the DASH complex that connects microtubules with kinetochores and couples microtubule depolymerisation to chromosome movement; it is involved in retrieving kinetochores to the spindle poles before their re-orientation on the spindle in early mitosis and allows microtubule depolymerization to pull chromosomes apart and resist detachment during anaphase. Kinetochores, consisting of a centromere-associated inner segment and a microtubule-contacting outer segment, play a crucial role in chromosome segregation by mediating the physical connection between centromeric DNA and microtubules. Kinetochores also serve as an input point for the spindle assembly checkpoint, which delays anaphase until all chromosomes have bioriented on the mitotic spindle. The chain is DASH complex subunit HSK3 from Chaetomium thermophilum (strain DSM 1495 / CBS 144.50 / IMI 039719) (Thermochaetoides thermophila).